Here is a 587-residue protein sequence, read N- to C-terminus: Chaperonin CPN60, mitochondrial (587 aa).

The N-terminal 32 residues, Met-1 to Tyr-32, are a transit peptide targeting the mitochondrion.

This sequence belongs to the chaperonin (HSP60) family.

The protein localises to the mitochondrion. Its function is as follows. Implicated in mitochondrial protein import and macromolecular assembly. May facilitate the correct folding of imported proteins. May also prevent misfolding and promote the refolding and proper assembly of unfolded polypeptides generated under stress conditions in the mitochondrial matrix. In Brassica napus (Rape), this protein is Chaperonin CPN60, mitochondrial.